We begin with the raw amino-acid sequence, 306 residues long: Mitochondrial basic amino acids transporter (306 aa).

A run of 6 helical transmembrane segments spans residues 2 to 22, 61 to 81, 96 to 116, 153 to 172, 187 to 207, and 255 to 275; these read ALDF…GHPF, GLGS…GVQG, FLAG…MELA, GMVS…FLTY, LLVP…WLST, and LLRA…VLTY. Solcar repeat units follow at residues 2 to 86, 90 to 178, and 190 to 275; these read ALDF…TLRA, DSPL…MTRA, and PKLL…VLTY. The segment at 284–306 is disordered; it reads DSEAALGTSPTPAGSALAQPSSL. Residues 291–306 are compositionally biased toward polar residues; sequence TSPTPAGSALAQPSSL.

Belongs to the mitochondrial carrier (TC 2.A.29) family. As to expression, widely expressed, with highest levels in the brain, including cortex, cerebellum, hippocampus and hypothalamus, and moderate levels in liver, kidney, heart and testis.

Its subcellular location is the mitochondrion inner membrane. It carries out the reaction L-lysine(out) + L-arginine(in) = L-lysine(in) + L-arginine(out). The catalysed reaction is L-histidine(out) + L-arginine(in) = L-histidine(in) + L-arginine(out). It catalyses the reaction L-ornithine(in) + L-arginine(out) = L-ornithine(out) + L-arginine(in). The enzyme catalyses L-homoarginine(in) + L-arginine(out) = L-homoarginine(out) + L-arginine(in). It carries out the reaction N(omega)-methyl-L-arginine(in) + L-arginine(out) = N(omega)-methyl-L-arginine(out) + L-arginine(in). The catalysed reaction is L-arginine(in) = L-arginine(out). It catalyses the reaction L-lysine(in) = L-lysine(out). The enzyme catalyses L-ornithine(in) = L-ornithine(out). It carries out the reaction L-histidine(out) = L-histidine(in). Its function is as follows. Mitochondrial transporter of arginine, lysine, homoarginine, methylarginine. Transports with a much lesser extent, ornithine and histidine. Does not transport carnitine nor acylcarnitines. Functions by both counter-exchange and uniport mechanisms. Plays a physiological role in the import of basic amino acids into mitochondria for mitochondrial protein synthesis and amino acid degradation. In Mus musculus (Mouse), this protein is Mitochondrial basic amino acids transporter (Slc25a29).